The sequence spans 278 residues: Probable cytochrome c oxidase subunit 3 (278 aa).

Transmembrane regions (helical) follow at residues 21 to 41 (PWPVLTSFALLLLVIGGVSFM), 46 to 66 (FNIYILSAGVISVGYCLYSWW), 89 to 109 (IGMALFILTEIVFFGVFFASF), 174 to 194 (CVTALALTILLGIFFTTMQAY), 212 to 232 (FYLATGFHGAHVIIGTIFLIV), and 256 to 276 (AWYWHFVDVVWLFLFTFVYIF).

The protein belongs to the cytochrome c oxidase subunit 3 family.

The protein resides in the cell membrane. It catalyses the reaction 4 Fe(II)-[cytochrome c] + O2 + 8 H(+)(in) = 4 Fe(III)-[cytochrome c] + 2 H2O + 4 H(+)(out). This Rickettsia felis (strain ATCC VR-1525 / URRWXCal2) (Rickettsia azadi) protein is Probable cytochrome c oxidase subunit 3 (ctaE).